The primary structure comprises 71 residues: uncharacterized protein (71 aa).

The disordered stretch occupies residues 1–71 (MLFETLKSLS…AFFSRPFYSE (71 aa)). Positions 7 to 33 (KSLSQQNGGQFSDEQSFESPISSSFNG) are enriched in polar residues. Over residues 35-65 (SMPFGSPSSTMSSSYKGNTNSSTKSSSAFFS) the composition is skewed to low complexity.

This is an uncharacterized protein from Dictyostelium discoideum (Social amoeba).